Here is a 165-residue protein sequence, read N- to C-terminus: Protein phosphatase 1 regulatory subunit 14C (165 aa).

A compositionally biased stretch (low complexity) spans M1–G12. The segment at M1–T73 is disordered. Position 2 is an N-acetylserine (S2). S25 carries the post-translational modification Phosphoserine. An Omega-N-methylarginine modification is found at R27. A Phosphoserine modification is found at S33. A compositionally biased stretch (low complexity) spans G35 to Q63. Phosphothreonine; by ILK1 is present on T73.

It belongs to the PP1 inhibitor family. Has over 600-fold higher inhibitory activity when phosphorylated, creating a molecular switch for regulating the phosphorylation status of PPP1CA substrates and smooth muscle contraction. The main inhibitory site appears to be Thr-73. In terms of tissue distribution, detected in breast cancer.

It is found in the cytoplasm. Its subcellular location is the membrane. Inhibitor of the PP1 regulatory subunit PPP1CA. The sequence is that of Protein phosphatase 1 regulatory subunit 14C (PPP1R14C) from Homo sapiens (Human).